Reading from the N-terminus, the 228-residue chain is Histidine/lysine/arginine/ornithine transport system permease protein HisQ (228 aa).

Residues 1 to 12 lie on the Periplasmic side of the membrane; sequence MLYGFSGVILQG. Residues 13–33 traverse the membrane as a helical segment; it reads AIVTLELALSSVVLAVLIGLV. An ABC transmembrane type-1 domain is found at 13–212; sequence AIVTLELALS…VFTTVSNGVL (200 aa). Over 34–58 the chain is Cytoplasmic; that stretch reads GAGAKLSQNRVTGLIFEGYTTLIRG. A helical membrane pass occupies residues 59–79; the sequence is VPDLVLMLLIFYGLQIALNVV. Topologically, residues 80-87 are periplasmic; it reads TDSLGIDQ. Residues 88–108 traverse the membrane as a helical segment; sequence IDIDPMVAGIITLGFIYGAYF. Residues 109–152 lie on the Cytoplasmic side of the membrane; it reads TETFRGAFMAVPKGHIEAATAFGFTHGQTFRRIMFPAMMRYALP. A helical membrane pass occupies residues 153-173; it reads GIGNNWQVILKATALVSLLGL. At 174 to 194 the chain is on the periplasmic side; the sequence is EDVVKATQLAGKSTWEPFYFA. The chain crosses the membrane as a helical span at residues 195–215; the sequence is VVCGLIYLVFTTVSNGVLLLL. Residues 216-228 are Cytoplasmic-facing; sequence ERRYSVGVKRADL.

The protein belongs to the binding-protein-dependent transport system permease family. HisMQ subfamily. As to quaternary structure, the HisPMQJ complex is composed of two ATP-binding proteins (HisP), two transmembrane proteins (HisM and HisQ) and a solute-binding protein (HisJ). The HisPMQ-ArgT complex is composed of two ATP-binding proteins (HisP), two transmembrane proteins (HisM and HisQ) and a solute-binding protein (ArgT).

The protein localises to the cell inner membrane. In terms of biological role, part of the ABC transporter complex HisPMQJ involved in histidine transport. Is also part of the ABC transporter complex HisPMQ-ArgT involved in lysine/arginine/ornithine transport. Probably responsible for the translocation of the substrate across the membrane. The polypeptide is Histidine/lysine/arginine/ornithine transport system permease protein HisQ (hisQ) (Salmonella typhi).